Consider the following 200-residue polypeptide: dITP/XTP pyrophosphatase (200 aa).

Residue 8-13 (TGNQGK) coordinates substrate. Residue Asp69 is the Proton acceptor of the active site. Asp69 is a binding site for Mg(2+). Residues Ser70, 154-157 (FGYD), Lys177, and 182-183 (HR) each bind substrate.

This sequence belongs to the HAM1 NTPase family. In terms of assembly, homodimer. Mg(2+) serves as cofactor.

It carries out the reaction XTP + H2O = XMP + diphosphate + H(+). The catalysed reaction is dITP + H2O = dIMP + diphosphate + H(+). The enzyme catalyses ITP + H2O = IMP + diphosphate + H(+). Functionally, pyrophosphatase that catalyzes the hydrolysis of nucleoside triphosphates to their monophosphate derivatives, with a high preference for the non-canonical purine nucleotides XTP (xanthosine triphosphate), dITP (deoxyinosine triphosphate) and ITP. Seems to function as a house-cleaning enzyme that removes non-canonical purine nucleotides from the nucleotide pool, thus preventing their incorporation into DNA/RNA and avoiding chromosomal lesions. The sequence is that of dITP/XTP pyrophosphatase from Vibrio parahaemolyticus serotype O3:K6 (strain RIMD 2210633).